The chain runs to 324 residues: Calpain-2 catalytic subunit (324 aa).

Residues 1–138 (YPNTFWMNPQ…KKADYQVVDD (138 aa)) are domain III. The interval 139-153 (EIEADLEENDASEDD) is linker. Residues 158–324 (FRRLFAQLAG…LISWLCFSVL (167 aa)) form a domain IV region. A166, D169, E171, E176, D209, D211, S213, K215, E220, D239, D241, S243, T245, E250, D282, and N285 together coordinate Ca(2+). 2 consecutive EF-hand domains span residues 190 to 224 (DIKS…FYIL) and 226 to 261 (TKIQ…AGFK).

The protein belongs to the peptidase C2 family. As to quaternary structure, forms a heterodimer with a small (regulatory) subunit (CAPNS1). Interacts with CPEB3; this leads to cleavage of CPEB3. Ca(2+) is required as a cofactor. As to expression, ubiquitous.

The protein resides in the cytoplasm. It localises to the cell membrane. The enzyme catalyses Broad endopeptidase specificity.. Activated by 200-1000 micromolar concentrations of calcium and inhibited by calpastatin. In terms of biological role, calcium-regulated non-lysosomal thiol-protease which catalyzes limited proteolysis of substrates involved in cytoskeletal remodeling and signal transduction. Proteolytically cleaves MYOC at 'Arg-226'. Proteolytically cleaves CPEB3 following neuronal stimulation which abolishes CPEB3 translational repressor activity, leading to translation of CPEB3 target mRNAs. This chain is Calpain-2 catalytic subunit (CAPN2), found in Sus scrofa (Pig).